The following is a 355-amino-acid chain: uncharacterized protein (355 aa).

The active-site For GATase activity is the C2. The Glutamine amidotransferase type-2 domain occupies C2–G248.

This is an uncharacterized protein from Methanocaldococcus jannaschii (strain ATCC 43067 / DSM 2661 / JAL-1 / JCM 10045 / NBRC 100440) (Methanococcus jannaschii).